The sequence spans 1102 residues: Probable ubiquitin-conjugating enzyme E2 23 (1102 aa).

Disordered regions lie at residues 1–20, 25–111, 396–418, 579–602, 661–710, and 760–800; these read MEHE…DSSV, ASLS…DGNY, LPKV…PVHE, SPGN…SHQE, DESV…DIYA, and QAES…KNIL. Positions 31 to 44 are enriched in basic and acidic residues; sequence DSEHPNIYRQDIVK. Positions 59–88 are enriched in acidic residues; the sequence is GDSDSDSDISDEEEDDDDDEDNDDDDEDVE. Residues 579 to 596 are compositionally biased toward polar residues; the sequence is SPGNSFEEATQQDNGYQD. A compositionally biased stretch (polar residues) spans 779-800; the sequence is SKVNVTDNCESKGTQANAKNIL. The 161-residue stretch at 850-1010 folds into the UBC core domain; sequence QWFKKVDQDW…TFLLNCKTMM (161 aa). Catalysis depends on C936, which acts as the Glycyl thioester intermediate.

This sequence belongs to the ubiquitin-conjugating enzyme family.

It carries out the reaction S-ubiquitinyl-[E1 ubiquitin-activating enzyme]-L-cysteine + [E2 ubiquitin-conjugating enzyme]-L-cysteine = [E1 ubiquitin-activating enzyme]-L-cysteine + S-ubiquitinyl-[E2 ubiquitin-conjugating enzyme]-L-cysteine.. Its pathway is protein modification; protein ubiquitination. Its function is as follows. Accepts the ubiquitin from the E1 complex and catalyzes its covalent attachment to other proteins. In Arabidopsis thaliana (Mouse-ear cress), this protein is Probable ubiquitin-conjugating enzyme E2 23 (UBC23).